The following is an 89-amino-acid chain: UPF0213 protein LSEI_1587 (89 aa).

The GIY-YIG domain occupies 4 to 79 (KTYYFYVLLC…KHQTRHRKEV (76 aa)).

The protein belongs to the UPF0213 family.

The polypeptide is UPF0213 protein LSEI_1587 (Lacticaseibacillus paracasei (strain ATCC 334 / BCRC 17002 / CCUG 31169 / CIP 107868 / KCTC 3260 / NRRL B-441) (Lactobacillus paracasei)).